Here is a 414-residue protein sequence, read N- to C-terminus: NADH-ubiquinone oxidoreductase chain 4 (414 aa).

The next 10 membrane-spanning stretches (helical) occupy residues 18–38 (LVQL…MIGV), 47–67 (IAAF…LMSI), 96–116 (IIFI…PLHL), 126–146 (PTAG…YGYI), 160–180 (YFPI…IATL), 188–208 (IVAY…FSGV), 216–236 (IILM…IGVI), 254–274 (MMPI…AFPI), 293–313 (IIIA…SFWL), and 375–395 (VNIF…IVGM).

It belongs to the complex I subunit 4 family.

It is found in the mitochondrion membrane. The enzyme catalyses a ubiquinone + NADH + 5 H(+)(in) = a ubiquinol + NAD(+) + 4 H(+)(out). Core subunit of the mitochondrial membrane respiratory chain NADH dehydrogenase (Complex I) that is believed to belong to the minimal assembly required for catalysis. Complex I functions in the transfer of electrons from NADH to the respiratory chain. The immediate electron acceptor for the enzyme is believed to be ubiquinone. The protein is NADH-ubiquinone oxidoreductase chain 4 (nad4) of Dictyostelium citrinum (Slime mold).